The following is a 435-amino-acid chain: Ribulose bisphosphate carboxylase/oxygenase activase 2, chloroplastic (435 aa).

The transit peptide at 1-56 (MAAAYSTVGAVNRAPLSLNGSGARASLVPSTAFFGSSLKKSAAKFPKASSGNFKIV) directs the protein to the chloroplast. 165 to 172 (GGKGQGKS) provides a ligand contact to ATP.

Belongs to the RuBisCO activase family.

It localises to the plastid. Its subcellular location is the chloroplast stroma. Its function is as follows. Activation of RuBisCO (ribulose-1,5-bisphosphate carboxylase/oxygenase; EC 4.1.1.39) involves the ATP-dependent carboxylation of the epsilon-amino group of lysine leading to a carbamate structure. The protein is Ribulose bisphosphate carboxylase/oxygenase activase 2, chloroplastic (RCA2) of Larrea tridentata (Creosote bush).